The sequence spans 245 residues: MKIIFNADDFGISPGAVYGILESYKRGVVKSTTLLANSPAFDLAVEVAKENPGLDIGAHLTLTFGSPVLQGLETLTDDDGRFRRNYTSLENGLADVDMNEVERELTAQIEKILDAGITISHFDTHHSIEPLIYPVQHKLAEKYGVSIRRHSDVSDFGAIKTPDLFATEFYADGVSFETIKKLVQKHIGTNDVVEVMTHPAFIDETLREISSYVEPRIKEVSILTSRELQAYLGQQEVEIISFRDL.

Mg(2+) contacts are provided by His-59 and His-125.

The protein belongs to the YdjC deacetylase family. In terms of assembly, homodimer. Mg(2+) serves as cofactor.

Probably catalyzes the deacetylation of acetylated carbohydrates an important step in the degradation of oligosaccharides. The sequence is that of Carbohydrate deacetylase from Listeria monocytogenes serotype 4b (strain CLIP80459).